We begin with the raw amino-acid sequence, 372 residues long: Fatty acid 2-hydroxylase (372 aa).

In terms of domain architecture, Cytochrome b5 heme-binding spans 8–86 (AASFTSAEVQ…LEQYYVGELR (79 aa)). His43 and His69 together coordinate heme. Helical transmembrane passes span 168 to 188 (VWYS…WSYY) and 213 to 233 (SVFI…EYLI). The 143-residue stretch at 219–361 (FVLGMLIWTL…TKLWDYFFHT (143 aa)) folds into the Fatty acid hydroxylase domain. Zn(2+)-binding residues include His234, His239, His257, His260, and His261. A run of 2 helical transmembrane segments spans residues 268-288 (SRLV…YVFL) and 290-310 (LILP…GYVL). Residues His315, His319, His336, His339, and His340 each coordinate Zn(2+).

It belongs to the sterol desaturase family. SCS7 subfamily. Zn(2+) is required as a cofactor. Detected in oligodendrocytes (at protein level). Detected in sciatic nerve.

Its subcellular location is the endoplasmic reticulum membrane. It localises to the microsome membrane. The enzyme catalyses a 1,2-saturated fatty acid + 2 Fe(II)-[cytochrome b5] + O2 + 2 H(+) = a (R)-2-hydroxy fatty acid + 2 Fe(III)-[cytochrome b5] + H2O. It catalyses the reaction hexadecanoate + 2 Fe(II)-[cytochrome b5] + O2 + 2 H(+) = (R)-2-hydroxyhexadecanoate + 2 Fe(III)-[cytochrome b5] + H2O. The catalysed reaction is octadecanoate + 2 Fe(II)-[cytochrome b5] + O2 + 2 H(+) = (R)-2-hydroxyoctadecanoate + 2 Fe(III)-[cytochrome b5] + H2O. It carries out the reaction docosanoate + 2 Fe(II)-[cytochrome b5] + O2 + 2 H(+) = 2-hydroxydocosanoate + 2 Fe(III)-[cytochrome b5] + H2O. The enzyme catalyses tetracosanoate + 2 Fe(II)-[cytochrome b5] + O2 + 2 H(+) = (R)-2-hydroxytetracosanoate + 2 Fe(III)-[cytochrome b5] + H2O. Its pathway is lipid metabolism; fatty acid metabolism. It participates in sphingolipid metabolism; galactosylceramide biosynthesis. Its function is as follows. Catalyzes the hydroxylation of free fatty acids at the C-2 position to produce 2-hydroxy fatty acids, which are building blocks of sphingolipids and glycosphingolipids common in neural tissue and epidermis. FA2H is stereospecific for the production of (R)-2-hydroxy fatty acids. Plays an essential role in the synthesis of galactosphingolipids of the myelin sheath. Responsible for the synthesis of sphingolipids and glycosphingolipids involved in the formation of epidermal lamellar bodies critical for skin permeability barrier. Participates in the synthesis of glycosphingolipids and a fraction of type II wax diesters in sebaceous gland, specifically regulating hair follicle homeostasis. Involved in the synthesis of sphingolipids of plasma membrane rafts, controlling lipid raft mobility and trafficking of raft-associated proteins. The protein is Fatty acid 2-hydroxylase of Rattus norvegicus (Rat).